A 178-amino-acid polypeptide reads, in one-letter code: Glutamyl-tRNA(Gln) amidotransferase subunit C, mitochondrial (178 aa).

Residues 1–31 (MFRHIFTLGPRSISAITVRSRRALSSTAKPV) constitute a mitochondrion transit peptide. The segment at 26 to 67 (STAKPVSAPVTSDDRPNLDVKHLKHPTKVPQQPHKSDIDRRQ) is disordered. Over residues 37–46 (SDDRPNLDVK) the composition is skewed to basic and acidic residues.

It belongs to the GatC family. As to quaternary structure, subunit of the heterotrimeric GatCAB amidotransferase (AdT) complex, composed of A, B and C subunits.

Its subcellular location is the mitochondrion. It carries out the reaction L-glutamyl-tRNA(Gln) + L-glutamine + ATP + H2O = L-glutaminyl-tRNA(Gln) + L-glutamate + ADP + phosphate + H(+). In terms of biological role, allows the formation of correctly charged Gln-tRNA(Gln) through the transamidation of misacylated Glu-tRNA(Gln) in the mitochondria. The reaction takes place in the presence of glutamine and ATP through an activated gamma-phospho-Glu-tRNA(Gln). The polypeptide is Glutamyl-tRNA(Gln) amidotransferase subunit C, mitochondrial (Aedes aegypti (Yellowfever mosquito)).